The chain runs to 292 residues: Glutamate racemase (292 aa).

Substrate is bound by residues 28–29 and 60–61; these read DS and YG. The active-site Proton donor/acceptor is C91. 92 to 93 serves as a coordination point for substrate; sequence NT. Catalysis depends on C200, which acts as the Proton donor/acceptor. Position 201–202 (201–202) interacts with substrate; sequence TH.

This sequence belongs to the aspartate/glutamate racemases family.

The enzyme catalyses L-glutamate = D-glutamate. It functions in the pathway cell wall biogenesis; peptidoglycan biosynthesis. Its function is as follows. Provides the (R)-glutamate required for cell wall biosynthesis. This Nostoc sp. (strain PCC 7120 / SAG 25.82 / UTEX 2576) protein is Glutamate racemase.